Reading from the N-terminus, the 367-residue chain is DNA replication and repair protein RecF (367 aa).

30 to 37 (GENAQGKT) contributes to the ATP binding site.

The protein belongs to the RecF family.

It is found in the cytoplasm. The RecF protein is involved in DNA metabolism; it is required for DNA replication and normal SOS inducibility. RecF binds preferentially to single-stranded, linear DNA. It also seems to bind ATP. This chain is DNA replication and repair protein RecF, found in Chlamydia caviae (strain ATCC VR-813 / DSM 19441 / 03DC25 / GPIC) (Chlamydophila caviae).